The chain runs to 462 residues: Argininosuccinate lyase (462 aa).

This sequence belongs to the lyase 1 family. Argininosuccinate lyase subfamily.

The protein localises to the cytoplasm. The enzyme catalyses 2-(N(omega)-L-arginino)succinate = fumarate + L-arginine. The protein operates within amino-acid biosynthesis; L-arginine biosynthesis; L-arginine from L-ornithine and carbamoyl phosphate: step 3/3. This Bacillus cereus (strain B4264) protein is Argininosuccinate lyase.